The chain runs to 83 residues: RNA-binding protein Hfq (83 aa).

The 60-residue stretch at 9–68 (DPYLNALRKERIPVSIFLVNGIKLQGQIESFDQFVILLKNTVSQMVYKHAISTVVPARNV) folds into the Sm domain.

This sequence belongs to the Hfq family. Homohexamer.

Functionally, RNA chaperone that binds small regulatory RNA (sRNAs) and mRNAs to facilitate mRNA translational regulation in response to envelope stress, environmental stress and changes in metabolite concentrations. Also binds with high specificity to tRNAs. The polypeptide is RNA-binding protein Hfq (Hahella chejuensis (strain KCTC 2396)).